The chain runs to 487 residues: Histamine H1 receptor (487 aa).

The Extracellular segment spans residues 1-29; that stretch reads MSLPNSSCLLEDKMCEGNKTTMASPQLMP. N-linked (GlcNAc...) asparagine glycosylation is found at Asn-5 and Asn-18. Residues 30–50 form a helical membrane-spanning segment; that stretch reads LVVVLSTICLVTVGLNLLVLY. Over 51 to 64 the chain is Cytoplasmic; sequence AVRSERKLHTVGNL. Residues 65–89 traverse the membrane as a helical segment; that stretch reads YIVSLSVADLIVGAVVMPMNILYLL. The Extracellular segment spans residues 90 to 97; it reads MSKWSLGR. Residues 98–123 traverse the membrane as a helical segment; it reads PLCLFWLSMDYVASTASIFSVFILCI. Cys-100 and Cys-180 are joined by a disulfide. Asp-107 and Thr-112 together coordinate histamine. Positions 107 to 112 are important for agonist binding; it reads DYVAST. Topologically, residues 124 to 144 are cytoplasmic; that stretch reads DRYRSVQQPLRYLKYRTKTRA. A phosphothreonine mark is found at Thr-140 and Thr-142. Residues 145-164 traverse the membrane as a helical segment; sequence SATILGAWFLSFLWVIPILG. Residues 165-188 are Extracellular-facing; sequence WNHFMQQTSVRREDKCETDFYDVT. A helical transmembrane segment spans residues 189-211; sequence WFKVMTAIINFYLPTLLMLWFYA. Asn-198 provides a ligand contact to histamine. The Cytoplasmic portion of the chain corresponds to 212 to 416; that stretch reads KIYKAVRQHC…MNRERKAAKQ (205 aa). Ser-230 carries the post-translational modification Phosphoserine. Over residues 238 to 261 the composition is skewed to basic and acidic residues; the sequence is KLRPENPKGDAKKPGKESPWEVLK. The disordered stretch occupies residues 238 to 292; the sequence is KLRPENPKGDAKKPGKESPWEVLKRKPKDAGGGSVLKSPSQTXKEMKSPVVFSQE. Phosphothreonine is present on Thr-279. Phosphoserine is present on residues Ser-344 and Ser-347. The tract at residues 345–379 is disordered; that stretch reads EISEDQMLGDSQSFSRTDSDTTTETAPGKGKLRSG. The segment covering 353–369 has biased composition (polar residues); sequence GDSQSFSRTDSDTTTET. Ser-380, Ser-396, and Ser-398 each carry phosphoserine. The helical transmembrane segment at 417–440 threads the bilayer; it reads LGFIMAAFILCWIPYFIFFMVIAF. The interval 424–428 is important for agonist binding; the sequence is FILCW. Residue Tyr-431 coordinates histamine. A disulfide bridge connects residues Cys-441 and Cys-444. The Extracellular portion of the chain corresponds to 441-446; the sequence is CKNCCN. Residues 447–469 form a helical membrane-spanning segment; it reads EHLHMFTIWLGYINSTLNPLIYP. Over 470-487 the chain is Cytoplasmic; sequence LCNENFKKTFKRILHIRS.

It belongs to the G-protein coupled receptor 1 family. In terms of processing, phosphorylation at sites in the second and third cytoplasmic loops independently contribute to agonist-induced receptor down-regulation.

The protein localises to the cell membrane. Its function is as follows. G-protein-coupled receptor for histamine, a biogenic amine that functions as an immune modulator and a neurotransmitter. Through the H1 receptor, histamine mediates the contraction of smooth muscles and increases capillary permeability due to contraction of terminal venules. Also mediates neurotransmission in the central nervous system and thereby regulates circadian rhythms, emotional and locomotor activities as well as cognitive functions. This chain is Histamine H1 receptor, found in Pan troglodytes (Chimpanzee).